The primary structure comprises 573 residues: Mucin-13 (573 aa).

An N-terminal signal peptide occupies residues 1–17; that stretch reads MKGFLLLSLSLLLVTVG. Over residues 16-234 the composition is skewed to low complexity; sequence VGSSSQASST…VPSGGSTGPS (219 aa). The interval 16–237 is disordered; the sequence is VGSSSQASST…GGSTGPSDLC (222 aa). Topologically, residues 18–480 are extracellular; it reads SSSQASSTTS…FGYSGMNCKD (463 aa). The 41-residue stretch at 233–273 folds into the EGF-like 1 domain; it reads PSDLCNPNPCKGTASCVKLHSKHFCLCLEGYYYNSSLSSCV. Disulfide bonds link C237/C248, C242/C257, and C259/C272. 3 N-linked (GlcNAc...) asparagine glycosylation sites follow: N266, N316, and N397. One can recognise an SEA domain in the interval 274-391; the sequence is KGTTFPGDIS…DYVSINLCDH (118 aa). 2 EGF-like domains span residues 385 to 425 and 425 to 467; these read SINL…PFCV and VAVT…RKCE. 6 cysteine pairs are disulfide-bonded: C389-C402, C394-C408, C410-C424, C429-C441, C433-C451, and C453-C466. The chain crosses the membrane as a helical span at residues 481–508; it reads QFQLILTIVGTIAGALILILLIAFIVSA. Topologically, residues 509–573 are cytoplasmic; sequence RSKNKKKDGE…NQRSMPRPDY (65 aa). Positions 548-573 are disordered; the sequence is PKVRTGVPSQTPNPYANQRSMPRPDY. The span at 554–567 shows a compositional bias: polar residues; sequence VPSQTPNPYANQRS.

In terms of assembly, homodimer of beta subunits. In terms of processing, cleaved into two subunits, alpha and beta, probably between the first EGF domain and the SEA domain. Beta subunit contains the cytoplasmic tail and alpha subunit the extracellular tail. The homooligomerization into dimers is dependent on intrachain disulfide bonds. Post-translationally, highly N-glycosylated.

The protein localises to the cell membrane. It localises to the secreted. In terms of biological role, epithelial and hemopoietic transmembrane mucin that may play a role in cell signaling. This Mus musculus (Mouse) protein is Mucin-13 (Muc13).